The sequence spans 468 residues: 3-isopropylmalate dehydratase large subunit (468 aa).

Cys348, Cys409, and Cys412 together coordinate [4Fe-4S] cluster.

Belongs to the aconitase/IPM isomerase family. LeuC type 1 subfamily. Heterodimer of LeuC and LeuD. The cofactor is [4Fe-4S] cluster.

The enzyme catalyses (2R,3S)-3-isopropylmalate = (2S)-2-isopropylmalate. Its pathway is amino-acid biosynthesis; L-leucine biosynthesis; L-leucine from 3-methyl-2-oxobutanoate: step 2/4. Functionally, catalyzes the isomerization between 2-isopropylmalate and 3-isopropylmalate, via the formation of 2-isopropylmaleate. The polypeptide is 3-isopropylmalate dehydratase large subunit (Dechloromonas aromatica (strain RCB)).